The primary structure comprises 300 residues: Porphobilinogen deaminase (300 aa).

Cysteine 239 bears the S-(dipyrrolylmethanemethyl)cysteine mark.

Belongs to the HMBS family. Monomer. The cofactor is dipyrromethane.

It carries out the reaction 4 porphobilinogen + H2O = hydroxymethylbilane + 4 NH4(+). The protein operates within porphyrin-containing compound metabolism; protoporphyrin-IX biosynthesis; coproporphyrinogen-III from 5-aminolevulinate: step 2/4. Functionally, tetrapolymerization of the monopyrrole PBG into the hydroxymethylbilane pre-uroporphyrinogen in several discrete steps. This is Porphobilinogen deaminase from Francisella tularensis subsp. tularensis (strain FSC 198).